The following is a 139-amino-acid chain: NADPH-dependent 7-cyano-7-deazaguanine reductase (139 aa).

C34 serves as the catalytic Thioimide intermediate. D41 serves as the catalytic Proton donor. Residues 56-58 (VEL) and 75-76 (HE) contribute to the substrate site.

Belongs to the GTP cyclohydrolase I family. QueF type 1 subfamily.

It localises to the cytoplasm. The enzyme catalyses 7-aminomethyl-7-carbaguanine + 2 NADP(+) = 7-cyano-7-deazaguanine + 2 NADPH + 3 H(+). It functions in the pathway tRNA modification; tRNA-queuosine biosynthesis. Its function is as follows. Catalyzes the NADPH-dependent reduction of 7-cyano-7-deazaguanine (preQ0) to 7-aminomethyl-7-deazaguanine (preQ1). This chain is NADPH-dependent 7-cyano-7-deazaguanine reductase, found in Methylobacillus flagellatus (strain ATCC 51484 / DSM 6875 / VKM B-1610 / KT).